A 343-amino-acid polypeptide reads, in one-letter code: Thromboxane A2 receptor (343 aa).

Residues 1-29 are Extracellular-facing; sequence MWPNGSSLGPCFRPTNITLEERRLIASPW. N-linked (GlcNAc...) asparagine glycosylation is found at Asn4 and Asn16. The chain crosses the membrane as a helical span at residues 30–52; sequence FAASFCVVGLASNLLALSVLAGA. Over 53–66 the chain is Cytoplasmic; that stretch reads RQGGSHTRSSFLTF. The helical transmembrane segment at 67–87 threads the bilayer; it reads LCGLVLTDFLGLLVTGTIVVS. Residues 88-106 lie on the Extracellular side of the membrane; that stretch reads QHAALFEWHAVDPGCRLCR. Cys105 and Cys183 form a disulfide bridge. The helical transmembrane segment at 107–128 threads the bilayer; the sequence is FMGVVMIFFGLSPLLLGAAMAS. Topologically, residues 129–149 are cytoplasmic; the sequence is ERYLGITRPFSRPAVASQRRA. Residues 150-172 traverse the membrane as a helical segment; it reads WATVGLVWAAALALGLLPLLGVG. The Extracellular segment spans residues 173–193; sequence RYTVQYPGSWCFLTLGAESGD. A helical transmembrane segment spans residues 194–219; that stretch reads VAFGLLFSMLGGLSVGLSFLLNTVSV. The Cytoplasmic portion of the chain corresponds to 220 to 246; sequence ATLCHVYHGQEAAQQRPRDSEVEMMAQ. The helical transmembrane segment at 247 to 270 threads the bilayer; sequence LLGIMVVASVCWLPLLVFIAQTVL. Topologically, residues 271–289 are extracellular; it reads RNPPAMSPAGQLSRTTEKE. Residues 290-311 traverse the membrane as a helical segment; it reads LLIYLRVATWNQILDPWVYILF. Over 312-343 the chain is Cytoplasmic; that stretch reads RRAVLRRLQPRLSTRPRSLSLQPQLTQRSGLQ. A phosphoserine mark is found at Ser329 and Ser331.

This sequence belongs to the G-protein coupled receptor 1 family. Interacts with RPGRIP1L. Interacts with PSMA3. Interacts with RACK1; the interaction regulates TBXA2R cell surface expression.

The protein localises to the cell membrane. Its function is as follows. Receptor for thromboxane A2 (TXA2), a potent stimulator of platelet aggregation. The activity of this receptor is mediated by a G-protein that activates a phosphatidylinositol-calcium second messenger system. In the kidney, the binding of TXA2 to glomerular TP receptors causes intense vasoconstriction. Activates phospholipase C. Activates adenylyl cyclase. In terms of biological role, inhibits adenylyl cyclase. The chain is Thromboxane A2 receptor (TBXA2R) from Homo sapiens (Human).